Here is a 312-residue protein sequence, read N- to C-terminus: GDSL esterase/lipase At2g38180 (312 aa).

The signal sequence occupies residues 1-22; it reads MVGPVRPQIVLFGSSIVQYSFT. An N-linked (GlcNAc...) asparagine glycan is attached at Asn79. The interval 285-312 is disordered; sequence EPPHPVSLCDHELTQNEQLEPPQPTARL.

The protein belongs to the 'GDSL' lipolytic enzyme family.

Its subcellular location is the secreted. The protein is GDSL esterase/lipase At2g38180 of Arabidopsis thaliana (Mouse-ear cress).